Consider the following 364-residue polypeptide: 3-isopropylmalate dehydrogenase (364 aa).

Residue 79 to 92 (GSKWDHLPEIEKPE) coordinates NAD(+). Residues Arg100, Arg110, Arg139, and Asp227 each contribute to the substrate site. Positions 227, 251, and 255 each coordinate Mg(2+). 285–297 (GSAPNIAGKTIAN) provides a ligand contact to NAD(+).

It belongs to the isocitrate and isopropylmalate dehydrogenases family. LeuB type 1 subfamily. Homodimer. It depends on Mg(2+) as a cofactor. Mn(2+) is required as a cofactor.

It is found in the cytoplasm. The enzyme catalyses (2R,3S)-3-isopropylmalate + NAD(+) = 4-methyl-2-oxopentanoate + CO2 + NADH. It participates in amino-acid biosynthesis; L-leucine biosynthesis; L-leucine from 3-methyl-2-oxobutanoate: step 3/4. Its function is as follows. Catalyzes the oxidation of 3-carboxy-2-hydroxy-4-methylpentanoate (3-isopropylmalate) to 3-carboxy-4-methyl-2-oxopentanoate. The product decarboxylates to 4-methyl-2 oxopentanoate. This is 3-isopropylmalate dehydrogenase from Buchnera aphidicola subsp. Thelaxes suberi.